A 542-amino-acid chain; its full sequence is N-substituted formamide deformylase (542 aa).

Residues 1 to 2 (MT) constitute a propeptide that is removed on maturation.

Homodimer. It depends on Zn(2+) as a cofactor.

The enzyme catalyses N-benzylformamide + H2O = benzylamine + formate. Its activity is regulated as follows. Completely inhibited by HgCl(2), CuCl, CuCl(2) and AgNO(3). Partially inhibited by ZnCl(2) and SnCl(2). Almost completely inhibited by the reducing reagent DTT. Partially inhibited by phenylhydrazine. Moderately inhibited by phenanthroline and 8-hydroxyquinoline. Completely inhibited by the thiol-specific inhibitors N-ethylmaleimide and p-chloromercuribenzoate. Not inhibited by the carbonyl-specific inhibitors aminoguanidine and semicarbazide, the chelating agents alpha,alpha'-dipyridyl, KCN, diethyldithiocarbamate and EDTA, or the oxidizing reagents and serine-modifying reagents such as H(2)O(2), ammonium persulfate, phenylmethanesulfonyl fluoride and diisopropyl fluorophosphates. Functionally, hydrolyzes N-substituted formamides, but not amides. N-benzylformamide is the preferred substrate, while N-butylformamide is hydrolyzed at a much lower rate. Has very low activity towards allylformamide, N-(2-cyclohex-1-enylethyl)formamide and N-(alpha-methylbenzyl)formamide. The protein is N-substituted formamide deformylase of Arthrobacter pascens.